We begin with the raw amino-acid sequence, 308 residues long: Small ribosomal subunit protein uS5c (308 aa).

A chloroplast-targeting transit peptide spans Met1 to Tyr55. The S5 DRBM domain maps to Phe152–Val215.

Component of the chloroplast small ribosomal subunit (SSU). Mature 70S chloroplast ribosomes of higher plants consist of a small (30S) and a large (50S) subunit. The 30S small subunit contains 1 molecule of ribosomal RNA (16S rRNA) and 24 different proteins. The 50S large subunit contains 3 rRNA molecules (23S, 5S and 4.5S rRNA) and 33 different proteins. uS5c binds directly to 16S ribosomal RNA.

Its subcellular location is the plastid. The protein localises to the chloroplast. In terms of biological role, component of the chloroplast ribosome (chloro-ribosome), a dedicated translation machinery responsible for the synthesis of chloroplast genome-encoded proteins, including proteins of the transcription and translation machinery and components of the photosynthetic apparatus. The protein is Small ribosomal subunit protein uS5c (rps5) of Spinacia oleracea (Spinach).